We begin with the raw amino-acid sequence, 514 residues long: Threonine synthase (514 aa).

Residue lysine 124 is modified to N6-(pyridoxal phosphate)lysine. Residues glycine 277, asparagine 278, phenylalanine 279, aspartate 281, and threonine 449 each contribute to the pyridoxal 5'-phosphate site. Serine 467 is modified (phosphoserine).

It belongs to the threonine synthase family. Pyridoxal 5'-phosphate is required as a cofactor.

It catalyses the reaction O-phospho-L-homoserine + H2O = L-threonine + phosphate. Its pathway is amino-acid biosynthesis; L-threonine biosynthesis; L-threonine from L-aspartate: step 5/5. Catalyzes the gamma-elimination of phosphate from L-phosphohomoserine and the beta-addition of water to produce L-threonine. In Saccharomyces cerevisiae (strain ATCC 204508 / S288c) (Baker's yeast), this protein is Threonine synthase (THR4).